Consider the following 842-residue polypeptide: Protein translocase subunit SecA (842 aa).

Residues Gln-85, 103–107, and Asp-493 each bind ATP; that span reads GEGKT. Positions 825, 827, 836, and 837 each coordinate Zn(2+).

This sequence belongs to the SecA family. Monomer and homodimer. Part of the essential Sec protein translocation apparatus which comprises SecA, SecYEG and auxiliary proteins SecDF. Other proteins may also be involved. It depends on Zn(2+) as a cofactor.

The protein resides in the cell membrane. Its subcellular location is the cytoplasm. The enzyme catalyses ATP + H2O + cellular proteinSide 1 = ADP + phosphate + cellular proteinSide 2.. Its function is as follows. Part of the Sec protein translocase complex. Interacts with the SecYEG preprotein conducting channel. Has a central role in coupling the hydrolysis of ATP to the transfer of proteins into and across the cell membrane, serving as an ATP-driven molecular motor driving the stepwise translocation of polypeptide chains across the membrane. The sequence is that of Protein translocase subunit SecA from Streptococcus equi subsp. zooepidemicus (strain H70).